We begin with the raw amino-acid sequence, 264 residues long: Ribosomal RNA small subunit methyltransferase A (264 aa).

S-adenosyl-L-methionine contacts are provided by Asn12, Leu14, Gly40, Glu61, Asp86, and Asn105.

This sequence belongs to the class I-like SAM-binding methyltransferase superfamily. rRNA adenine N(6)-methyltransferase family. RsmA subfamily.

The protein resides in the cytoplasm. It carries out the reaction adenosine(1518)/adenosine(1519) in 16S rRNA + 4 S-adenosyl-L-methionine = N(6)-dimethyladenosine(1518)/N(6)-dimethyladenosine(1519) in 16S rRNA + 4 S-adenosyl-L-homocysteine + 4 H(+). In terms of biological role, specifically dimethylates two adjacent adenosines (A1518 and A1519) in the loop of a conserved hairpin near the 3'-end of 16S rRNA in the 30S particle. May play a critical role in biogenesis of 30S subunits. The protein is Ribosomal RNA small subunit methyltransferase A of Fusobacterium nucleatum subsp. nucleatum (strain ATCC 25586 / DSM 15643 / BCRC 10681 / CIP 101130 / JCM 8532 / KCTC 2640 / LMG 13131 / VPI 4355).